The chain runs to 116 residues: Large ribosomal subunit protein bL19 (116 aa).

This sequence belongs to the bacterial ribosomal protein bL19 family.

Its function is as follows. This protein is located at the 30S-50S ribosomal subunit interface and may play a role in the structure and function of the aminoacyl-tRNA binding site. The chain is Large ribosomal subunit protein bL19 from Flavobacterium psychrophilum (strain ATCC 49511 / DSM 21280 / CIP 103535 / JIP02/86).